The chain runs to 139 residues: Centromere protein S (139 aa).

The tract at residues 99–139 (ELASSNMEQKEKKKKKSSAAKGRKTEENETPVTESEDSNMA) is disordered. Over residues 110–120 (KKKKKSSAAKG) the composition is skewed to basic residues.

This sequence belongs to the TAF9 family. CENP-S/MHF1 subfamily. Heterodimer with CENPX, sometimes called MHF; this interaction stabilizes both partners. MHF heterodimers can assemble to form tetrameric structures. MHF also coassemble with CENPT-CENPW heterodimers at centromeres to form the tetrameric CENP-T-W-S-X complex. Forms a discrete complex with FANCM and CENPX, called FANCM-MHF; this interaction, probably mediated by direct binding between CENPS and FANCM, leads to synergistic activation of double-stranded DNA binding and strongly stimulates FANCM-mediated DNA remodeling. Recruited by FANCM to the Fanconi anemia (FA) core complex, which consists of CENPS, CENPX, FANCA, FANCB, FANCC, FANCE, FANCF, FANCG, FANCL, FANCM, FAAP24 and FAAP100. The FA core complex associates with Bloom syndrome (BLM) complex, which consists of at least BLM, DNA topoisomerase 3-alpha (TOP3A), RMI1/BLAP75, RPA1/RPA70 and RPA2/RPA32. The super complex between FA and BLM is called BRAFT. Component of the CENPA-CAD complex, composed of CENPI, CENPK, CENPL, CENPO, CENPP, CENPQ, CENPR and CENPS. The CENPA-CAD complex is probably recruited on centromeres by the CENPA-NAC complex, at least composed of CENPA, CENPC, CENPH, CENPM, CENPN, CENPT and CENPU.

Its subcellular location is the nucleus. It localises to the chromosome. It is found in the centromere. The protein localises to the kinetochore. Its function is as follows. DNA-binding component of the Fanconi anemia (FA) core complex. Required for the normal activation of the FA pathway, leading to monoubiquitination of the FANCI-FANCD2 complex in response to DNA damage, cellular resistance to DNA cross-linking drugs, and prevention of chromosomal breakage. In complex with CENPX (MHF heterodimer), crucial cofactor for FANCM in both binding and ATP-dependent remodeling of DNA. Stabilizes FANCM. In complex with CENPX and FANCM (but not other FANC proteins), rapidly recruited to blocked forks and promotes gene conversion at blocked replication forks. In complex with CENPT, CENPW and CENPX (CENP-T-W-S-X heterotetramer), involved in the formation of a functional kinetochore outer plate, which is essential for kinetochore-microtubule attachment and faithful mitotic progression. As a component of MHF and CENP-T-W-S-X complexes, binds DNA and bends it to form a nucleosome-like structure. DNA-binding function is fulfilled in the presence of CENPX, with the following preference for DNA substates: Holliday junction &gt; double-stranded &gt; splay arm &gt; single-stranded. Does not bind DNA on its own. This chain is Centromere protein S (CENPS), found in Gallus gallus (Chicken).